The primary structure comprises 426 residues: Tol-Pal system protein TolB (426 aa).

The N-terminal stretch at 1–25 (MNILLSRFRLLLAAALAALSWGAQA) is a signal peptide.

The protein belongs to the TolB family. The Tol-Pal system is composed of five core proteins: the inner membrane proteins TolA, TolQ and TolR, the periplasmic protein TolB and the outer membrane protein Pal. They form a network linking the inner and outer membranes and the peptidoglycan layer.

It localises to the periplasm. Part of the Tol-Pal system, which plays a role in outer membrane invagination during cell division and is important for maintaining outer membrane integrity. This is Tol-Pal system protein TolB from Aromatoleum aromaticum (strain DSM 19018 / LMG 30748 / EbN1) (Azoarcus sp. (strain EbN1)).